Here is a 246-residue protein sequence, read N- to C-terminus: Probable transcriptional regulatory protein ORF2U (246 aa).

The protein belongs to the TACO1 family.

Its subcellular location is the cytoplasm. The protein is Probable transcriptional regulatory protein ORF2U of Hathewaya histolytica (Clostridium histolyticum).